A 280-amino-acid polypeptide reads, in one-letter code: Polyamine aminopropyltransferase (280 aa).

A PABS domain is found at 3-237; that stretch reads DVYFMERDPY…YWWSFSVGSK (235 aa). Q33 is an S-methyl-5'-thioadenosine binding site. Spermidine is bound by residues H64 and D88. Residues D108 and 139-140 contribute to the S-methyl-5'-thioadenosine site; that span reads DG. The active-site Proton acceptor is D157. 157 to 160 contacts spermidine; that stretch reads DSTD.

The protein belongs to the spermidine/spermine synthase family. In terms of assembly, homodimer or homotetramer.

It localises to the cytoplasm. The catalysed reaction is S-adenosyl 3-(methylsulfanyl)propylamine + putrescine = S-methyl-5'-thioadenosine + spermidine + H(+). It participates in amine and polyamine biosynthesis; spermidine biosynthesis; spermidine from putrescine: step 1/1. Catalyzes the irreversible transfer of a propylamine group from the amino donor S-adenosylmethioninamine (decarboxy-AdoMet) to putrescine (1,4-diaminobutane) to yield spermidine. This Hydrogenobaculum sp. (strain Y04AAS1) protein is Polyamine aminopropyltransferase.